Reading from the N-terminus, the 208-residue chain is MPPLFISLEGIDGSGKSTQTARLVDWLRVRGRDPLQTREPGGSEGAEEIRRLLVEGDPDRWSAETEILLFTAARRDHLERTIRPALASGRDVVTDRFADSTRVYQGATRGALRGLVDRIHAEAIEAEPDLTLILDMDPELALSRGLARDSGEDRFEDFGLPFQQKLRAGFQALAREYPDRCHIVDASADPDAIAHTIQTIVGQRLAEA.

Gly-10 to Ser-17 is a binding site for ATP.

This sequence belongs to the thymidylate kinase family.

The enzyme catalyses dTMP + ATP = dTDP + ADP. Phosphorylation of dTMP to form dTDP in both de novo and salvage pathways of dTTP synthesis. This Jannaschia sp. (strain CCS1) protein is Thymidylate kinase.